A 172-amino-acid polypeptide reads, in one-letter code: MPLLDSFTVDHTRMNAPAVRVAKTMQTPKGDTITVFDLRFTAPNKDILSEKGIHTLEHLYAGFMRNHLNGDSVEIIDISPMGCRTGFYMSLIGTPSEQQVADAWLASMEDVLKVESQNKIPELNEYQCGTAAMHSLEEAQQIAKNILAAGVSVNKNDELALPESMLKELRVD.

His-54, His-58, and Cys-128 together coordinate Fe cation.

It belongs to the LuxS family. In terms of assembly, homodimer. Fe cation serves as cofactor.

It catalyses the reaction S-(5-deoxy-D-ribos-5-yl)-L-homocysteine = (S)-4,5-dihydroxypentane-2,3-dione + L-homocysteine. Functionally, involved in the synthesis of autoinducer 2 (AI-2) which is secreted by bacteria and is used to communicate both the cell density and the metabolic potential of the environment. The regulation of gene expression in response to changes in cell density is called quorum sensing. Catalyzes the transformation of S-ribosylhomocysteine (RHC) to homocysteine (HC) and 4,5-dihydroxy-2,3-pentadione (DPD). The protein is S-ribosylhomocysteine lyase of Vibrio parahaemolyticus serotype O3:K6 (strain RIMD 2210633).